A 414-amino-acid chain; its full sequence is ATP-dependent Clp protease ATP-binding subunit ClpX (414 aa).

The ClpX-type ZB domain maps to Met1–Arg51. The Zn(2+) site is built by Cys10, Cys13, Cys32, and Cys35. Ser120 to Leu127 serves as a coordination point for ATP.

This sequence belongs to the ClpX chaperone family. Component of the ClpX-ClpP complex. Forms a hexameric ring that, in the presence of ATP, binds to fourteen ClpP subunits assembled into a disk-like structure with a central cavity, resembling the structure of eukaryotic proteasomes.

In terms of biological role, ATP-dependent specificity component of the Clp protease. It directs the protease to specific substrates. Can perform chaperone functions in the absence of ClpP. The sequence is that of ATP-dependent Clp protease ATP-binding subunit ClpX from Bacteroides thetaiotaomicron (strain ATCC 29148 / DSM 2079 / JCM 5827 / CCUG 10774 / NCTC 10582 / VPI-5482 / E50).